Consider the following 156-residue polypeptide: 6,7-dimethyl-8-ribityllumazine synthase (156 aa).

5-amino-6-(D-ribitylamino)uracil is bound by residues phenylalanine 23, alanine 57–glutamate 59, and alanine 81–isoleucine 83. Alanine 86–threonine 87 is a binding site for (2S)-2-hydroxy-3-oxobutyl phosphate. Histidine 89 functions as the Proton donor in the catalytic mechanism. Phenylalanine 114 is a 5-amino-6-(D-ribitylamino)uracil binding site. Arginine 128 contributes to the (2S)-2-hydroxy-3-oxobutyl phosphate binding site.

Belongs to the DMRL synthase family.

The catalysed reaction is (2S)-2-hydroxy-3-oxobutyl phosphate + 5-amino-6-(D-ribitylamino)uracil = 6,7-dimethyl-8-(1-D-ribityl)lumazine + phosphate + 2 H2O + H(+). It participates in cofactor biosynthesis; riboflavin biosynthesis; riboflavin from 2-hydroxy-3-oxobutyl phosphate and 5-amino-6-(D-ribitylamino)uracil: step 1/2. Its function is as follows. Catalyzes the formation of 6,7-dimethyl-8-ribityllumazine by condensation of 5-amino-6-(D-ribitylamino)uracil with 3,4-dihydroxy-2-butanone 4-phosphate. This is the penultimate step in the biosynthesis of riboflavin. The chain is 6,7-dimethyl-8-ribityllumazine synthase from Sulfurovum sp. (strain NBC37-1).